Here is a 365-residue protein sequence, read N- to C-terminus: Chorismate synthase (365 aa).

R47 is an NADP(+) binding site. FMN contacts are provided by residues 124–126 (RAS), G287, 302–306 (KPTAT), and R328. Residues 266–290 (FIKSDDSSKLRTTSNNSGGIQGGIS) form a disordered region.

The protein belongs to the chorismate synthase family. In terms of assembly, homotetramer. FMNH2 serves as cofactor.

It catalyses the reaction 5-O-(1-carboxyvinyl)-3-phosphoshikimate = chorismate + phosphate. The protein operates within metabolic intermediate biosynthesis; chorismate biosynthesis; chorismate from D-erythrose 4-phosphate and phosphoenolpyruvate: step 7/7. In terms of biological role, catalyzes the anti-1,4-elimination of the C-3 phosphate and the C-6 proR hydrogen from 5-enolpyruvylshikimate-3-phosphate (EPSP) to yield chorismate, which is the branch point compound that serves as the starting substrate for the three terminal pathways of aromatic amino acid biosynthesis. This reaction introduces a second double bond into the aromatic ring system. In Prochlorococcus marinus (strain MIT 9301), this protein is Chorismate synthase.